The following is a 192-amino-acid chain: Cytidylate kinase (192 aa).

12 to 20 (GLAGSGTTT) is a binding site for ATP.

Belongs to the cytidylate kinase family. Type 2 subfamily.

The protein localises to the cytoplasm. It carries out the reaction CMP + ATP = CDP + ADP. The enzyme catalyses dCMP + ATP = dCDP + ADP. This chain is Cytidylate kinase (cmk), found in Pyrococcus horikoshii (strain ATCC 700860 / DSM 12428 / JCM 9974 / NBRC 100139 / OT-3).